Consider the following 413-residue polypeptide: von Willebrand factor A domain-containing protein 1 (413 aa).

Positions M1–A20 are cleaved as a signal peptide. Positions D32–M211 constitute a VWFA domain. Phosphoserine occurs at positions 72, 78, and 91. Fibronectin type-III domains are found at residues W212 to E302 and G305 to G395. N262 carries N-linked (GlcNAc...) asparagine glycosylation. A disordered region spans residues A385–P413.

As to quaternary structure, homodimer or homomultimer; disulfide-linked. Interacts with HSPG2. In terms of processing, N-glycosylated.

It is found in the secreted. Its subcellular location is the extracellular space. It localises to the extracellular matrix. The protein resides in the basement membrane. Functionally, promotes matrix assembly. Involved in the organization of skeletal muscles and in the formation of neuromuscular junctions. The protein is von Willebrand factor A domain-containing protein 1 (VWA1) of Bos taurus (Bovine).